The chain runs to 500 residues: Probable zinc metalloprotease MGYG_02393 (500 aa).

The N-terminal stretch at 1–24 (MHLSMGGLLPGLALLASANALALA) is a signal peptide. N61, N103, and N124 each carry an N-linked (GlcNAc...) asparagine glycan. Residues H174, D194, and E230 each coordinate Zn(2+). N-linked (GlcNAc...) asparagine glycosylation is present at N245. D257 serves as a coordination point for Zn(2+). The Fibronectin type-III domain occupies 414–500 (MPRNVRVNTS…ERGVAVLPFP (87 aa)). N-linked (GlcNAc...) asparagine glycans are attached at residues N421 and N427.

This sequence belongs to the peptidase M28 family. M28B subfamily. Requires Zn(2+) as cofactor.

The protein localises to the secreted. The sequence is that of Probable zinc metalloprotease MGYG_02393 from Arthroderma gypseum (strain ATCC MYA-4604 / CBS 118893) (Microsporum gypseum).